Reading from the N-terminus, the 501-residue chain is Solute carrier family 2, facilitated glucose transporter member 5 (501 aa).

M1 is modified (N-acetylmethionine). Residues 1-18 (MEQQDPIKKEGRLTPVLA) lie on the Cytoplasmic side of the membrane. Residues 19–39 (LATLIAAFGSSFQYGYNVAAV) traverse the membrane as a helical segment. Y32 serves as a coordination point for D-fructose. Residues 40–68 (NSPAELMKAFYNETHYSRFSEYISEFSLT) lie on the Extracellular side of the membrane. N-linked (GlcNAc...) asparagine glycosylation occurs at N51. The helical transmembrane segment at 69 to 91 (LLWSISVSMFPFGGFVGSLMVGP) threads the bilayer. Residues 92–98 (LVNRLGR) lie on the Cytoplasmic side of the membrane. The helical transmembrane segment at 99–119 (KGTLLFNNIFSIVPAILMGTS) threads the bilayer. Residues 120–126 (KTARSYE) are Extracellular-facing. A helical membrane pass occupies residues 127–149 (MIILSRLLVGICAGLSSNVVPMY). Topologically, residues 150 to 161 (LGELSPKNLRGA) are cytoplasmic. Residues 162 to 182 (LGVVPQLFITVGILVAQIVGL) form a helical membrane-spanning segment. Q167 is a D-fructose binding site. Topologically, residues 183–192 (RSLLATEEGW) are extracellular. The chain crosses the membrane as a helical span at residues 193–213 (PILLGLTAIPAALQLLLLPFF). Residues 214–277 (PESPRYLLIQ…MFRMRSLRWQ (64 aa)) are Cytoplasmic-facing. Residues 278–298 (VISIIILMGGQQLSGVNAIYY) form a helical membrane-spanning segment. Residues Q288 and 296–298 (IYY) each bind D-fructose. At 299 to 313 (YADQIYLSAGVKDQD) the chain is on the extracellular side. Residues 314–334 (VQYVTVGTGAVNVLMTICAVF) form a helical membrane-spanning segment. The Cytoplasmic portion of the chain corresponds to 335 to 342 (VVEYLGRR). Residues 343 to 363 (ALLLLGFSVCFIACCVLTVAL) form a helical membrane-spanning segment. Topologically, residues 364 to 371 (ALQDRVSW) are extracellular. The helical transmembrane segment at 372-394 (MPYISIVCVISYVIGHALGPSPI) threads the bilayer. D-fructose is bound at residue H387. The Cytoplasmic portion of the chain corresponds to 395–412 (PALLITEVFLQSSRSAAY). The helical transmembrane segment at 413-433 (MVGGTVHWLSNFAVGLVFPFI) threads the bilayer. A D-fructose-binding site is contributed by 419–420 (HW). Residues 434–439 (QVGLGA) are Extracellular-facing. A helical membrane pass occupies residues 440–460 (YSFIIFAVICLLTTIYIFLIV). The Cytoplasmic segment spans residues 461–501 (PETKGKTFVEINHIFTKMNKVSDVHPAKDELKDIPLSAVEL).

It belongs to the major facilitator superfamily. Sugar transporter (TC 2.A.1.1) family. Glucose transporter subfamily.

It is found in the apical cell membrane. Its subcellular location is the cell membrane. It localises to the sarcolemma. It catalyses the reaction D-fructose(out) = D-fructose(in). In terms of biological role, functions as a fructose transporter that has only low activity with other monosaccharides. Can mediate the uptake of deoxyglucose, but with low efficiency. Essential for fructose uptake in the small intestine. Plays a role in the regulation of salt uptake and blood pressure in response to dietary fructose. Required for the development of high blood pressure in response to high dietary fructose intake. The sequence is that of Solute carrier family 2, facilitated glucose transporter member 5 from Equus caballus (Horse).